Here is a 103-residue protein sequence, read N- to C-terminus: Large ribosomal subunit protein bL21 (103 aa).

This sequence belongs to the bacterial ribosomal protein bL21 family. In terms of assembly, part of the 50S ribosomal subunit. Contacts protein L20.

In terms of biological role, this protein binds to 23S rRNA in the presence of protein L20. This is Large ribosomal subunit protein bL21 from Brevibacillus brevis (strain 47 / JCM 6285 / NBRC 100599).